A 500-amino-acid polypeptide reads, in one-letter code: NAD(P)H-quinone oxidoreductase chain 4, chloroplastic (500 aa).

Transmembrane regions (helical) follow at residues 4-24 (FPWLTIIVVFPIFAGSLIFFL), 35-55 (YTICICILELLLTTYAFCYHF), 87-107 (IGPILLTGFITTLATLAAWPV), 134-154 (LLLFFIMWELELIPVYLLLAM), 167-187 (FILYTAGGSVFLLMGVLGVAL), 208-228 (VLEIIFYIGFFIAFAVKSPII), 242-262 (HYSTCMLLAGILLKMGAYGLI), 272-292 (AHSIFSPWLMIIGTIQIIYAA), 305-325 (IAYPSVSHMGFIIIGISSLTD), 330-350 (GALLQIISHGFIGAALFFLAG), 386-406 (LALPGMSGFVAELIVFFGIIT), 411-431 (LLIPKLLITFVMAIGIILTPI), and 462-482 (LFLSISIFLPVIGIGIYPDFV).

This sequence belongs to the complex I subunit 4 family.

It is found in the plastid. The protein localises to the chloroplast thylakoid membrane. It carries out the reaction a plastoquinone + NADH + (n+1) H(+)(in) = a plastoquinol + NAD(+) + n H(+)(out). The catalysed reaction is a plastoquinone + NADPH + (n+1) H(+)(in) = a plastoquinol + NADP(+) + n H(+)(out). This Solanum tuberosum (Potato) protein is NAD(P)H-quinone oxidoreductase chain 4, chloroplastic.